The primary structure comprises 138 residues: NADH-quinone oxidoreductase subunit A (138 aa).

Helical transmembrane passes span 8-28 (FGAV…GYLT), 63-83 (FYVV…LFPW), and 93-113 (FALI…AYAW).

This sequence belongs to the complex I subunit 3 family. As to quaternary structure, NDH-1 is composed of 14 different subunits. Subunits NuoA, H, J, K, L, M, N constitute the membrane sector of the complex.

The protein resides in the cell inner membrane. The enzyme catalyses a quinone + NADH + 5 H(+)(in) = a quinol + NAD(+) + 4 H(+)(out). In terms of biological role, NDH-1 shuttles electrons from NADH, via FMN and iron-sulfur (Fe-S) centers, to quinones in the respiratory chain. The immediate electron acceptor for the enzyme in this species is believed to be a menaquinone. Couples the redox reaction to proton translocation (for every two electrons transferred, four hydrogen ions are translocated across the cytoplasmic membrane), and thus conserves the redox energy in a proton gradient. The polypeptide is NADH-quinone oxidoreductase subunit A (Prosthecochloris aestuarii (strain DSM 271 / SK 413)).